The following is a 420-amino-acid chain: D-tagatose-1,6-bisphosphate aldolase subunit GatZ (420 aa).

It belongs to the GatZ/KbaZ family. GatZ subfamily. As to quaternary structure, forms a complex with GatY.

It participates in carbohydrate metabolism; D-tagatose 6-phosphate degradation; D-glyceraldehyde 3-phosphate and glycerone phosphate from D-tagatose 6-phosphate: step 2/2. In terms of biological role, component of the tagatose-1,6-bisphosphate aldolase GatYZ that is required for full activity and stability of the Y subunit. Could have a chaperone-like function for the proper and stable folding of GatY. When expressed alone, GatZ does not show any aldolase activity. Is involved in the catabolism of galactitol. The sequence is that of D-tagatose-1,6-bisphosphate aldolase subunit GatZ from Shigella flexneri serotype 5b (strain 8401).